A 1396-amino-acid chain; its full sequence is DNA-directed RNA polymerase subunit beta' (1396 aa).

Residues C72, C74, C87, and C90 each contribute to the Zn(2+) site. 3 residues coordinate Mg(2+): D463, D465, and D467. The Zn(2+) site is built by C814, C889, C896, and C899.

This sequence belongs to the RNA polymerase beta' chain family. As to quaternary structure, the RNAP catalytic core consists of 2 alpha, 1 beta, 1 beta' and 1 omega subunit. When a sigma factor is associated with the core the holoenzyme is formed, which can initiate transcription. The cofactor is Mg(2+). Requires Zn(2+) as cofactor.

It catalyses the reaction RNA(n) + a ribonucleoside 5'-triphosphate = RNA(n+1) + diphosphate. In terms of biological role, DNA-dependent RNA polymerase catalyzes the transcription of DNA into RNA using the four ribonucleoside triphosphates as substrates. The protein is DNA-directed RNA polymerase subunit beta' of Chlamydia muridarum (strain MoPn / Nigg).